Here is a 586-residue protein sequence, read N- to C-terminus: Paxillin (586 aa).

An N-acetylmethionine modification is found at Met1. An LD motif 1 motif is present at residues 3 to 15; it reads DLDALLADLESTT. The tract at residues 13 to 138 is disordered; sequence STTSHISKRP…PSPTVMSSSL (126 aa). Tyr31 carries the post-translational modification Phosphotyrosine; by PTK6. Over residues 45–54 the composition is skewed to pro residues; that stretch reads VPPPVPPPPS. Ser83 and Ser85 each carry phosphoserine. Over residues 86 to 98 the composition is skewed to low complexity; the sequence is PIYSSSTKNSSAS. Tyr88 carries the post-translational modification Phosphotyrosine. Ser106 is modified (phosphoserine). Tyr118 is subject to Phosphotyrosine; by PTK6. Phosphoserine is present on residues Ser119, Ser126, and Ser130. A compositionally biased stretch (polar residues) spans 121 to 137; that stretch reads PNKQKSAEPSPTVMSSS. Thr132 is modified (phosphothreonine). Residues Ser137, Ser140, and Ser143 each carry the phosphoserine modification. Positions 144–156 match the LD motif 2 motif; it reads ELDRLLLELNAVQ. Tyr210 bears the Phosphotyrosine mark. Positions 220–241 are disordered; sequence GGKAGPLMKEKPKRNGGRGLED. Positions 245–257 match the LD motif 3 motif; sequence SVESLLDELENSV. Residue Ser259 is modified to Phosphoserine. Residues 266-290 are disordered; the sequence is VNQGEMSSPQRVTSSQQQTRISASS. Ser273 is modified (phosphoserine; by CDK5). Phosphoserine occurs at positions 279, 287, 290, 301, 317, 327, and 335. Residues 291–310 are required for binding to PARVA and ILK; the sequence is ATRELDELMASLSDFKFMAQ. Positions 294-305 match the LD motif 4 motif; that stretch reads ELDELMASLSDF. The tract at residues 309-329 is disordered; that stretch reads AQGKTGSSSPPGGLSKPGSQL. Positions 310–329 are enriched in low complexity; that stretch reads QGKTGSSSPPGGLSKPGSQL. An LD motif 5 motif is present at residues 328–340; sequence QLDSMLGSLQSDL. LIM zinc-binding domains lie at 353–403, 412–462, and 471–521; these read CGAC…CEKD, CYYC…CRKD, and CGGC…CEVH. The residue at position 528 (Ser528) is a Phosphoserine. The region spanning 530–580 is the LIM zinc-binding 4 domain; that stretch reads CSGCQKPITGRCITAMAKKFHPEHFVCAFCLKQLNKGTFKEQNDKPYCQSC.

Belongs to the paxillin family. In terms of assembly, interacts in vitro with VCL/vinculin as well as to the SH3 domain of SRC and, when tyrosine phosphorylated, to the SH2 domain of CRK. Interacts with GIT1. Interacts with NUDT16L1/SDOS. Interacts with PTK2/FAK1. Interacts with PTK2B/PYK2. Interacts with ASAP2. Interacts with unphosphorylated ITGA4. Interacts with RNF5. Interacts with PDCD10. Interacts with NEK3, the interaction is prolactin-dependent. Interacts with PTK6. Interacts with TGFB1I1. Interacts with SORBS1. Interacts with PARVB. Interacts (via LD motif 4) with PARVA/PARVIN. Interacts (via LD motif 4) with ILK. Interacts (via cytoplasmic domain) with CEACAM1; the interaction is phosphotyrosyl-dependent. Interacts with LIMA1; this complex stabilizes actin dynamics. Interacts with CD36 (via C-terminus). Interacts with TRIM15. Interacts with PAK4; PAK4 acts as a scaffold to suppport PAXI phosphorylation at Ser-301. Post-translationally, phosphorylated by MAPK1/ERK2. Phosphorylated on tyrosine residues during integrin-mediated cell adhesion, embryonic development, fibroblast transformation and following stimulation of cells by mitogens. Phosphorylation at Ser-273 by CDK5 reduces its interaction with PTK2/FAK1 in matrix-cell focal adhesions (MCFA) during oligodendrocytes (OLs) differentiation. Phosphorylation at Tyr-31 and Tyr-118 by PTK6 promote the activation of RAC1 via CRK/CrKII, thereby promoting migration and invasion. Phosphorylation at Ser-279 by SLK is required for PXN redistribution and cell motility. Phosphorylation at Ser-301 promotes focal adhesion disassembly during cell migration.

The protein resides in the cytoplasm. It localises to the cytoskeleton. The protein localises to the cell junction. It is found in the focal adhesion. Its subcellular location is the cell cortex. In terms of biological role, cytoskeletal protein involved in actin-membrane attachment at sites of cell adhesion to the extracellular matrix (focal adhesion). Recruits other proteins such as TRIM15 to focal adhesion. The protein is Paxillin of Rattus norvegicus (Rat).